The following is a 170-amino-acid chain: Ribosome maturation factor RimM (170 aa).

Residues 98-170 enclose the PRC barrel domain; the sequence is EGQYYWADLE…RIELDWDPDF (73 aa).

This sequence belongs to the RimM family. In terms of assembly, binds ribosomal protein uS19.

It is found in the cytoplasm. Its function is as follows. An accessory protein needed during the final step in the assembly of 30S ribosomal subunit, possibly for assembly of the head region. Essential for efficient processing of 16S rRNA. May be needed both before and after RbfA during the maturation of 16S rRNA. It has affinity for free ribosomal 30S subunits but not for 70S ribosomes. The protein is Ribosome maturation factor RimM of Alkalilimnicola ehrlichii (strain ATCC BAA-1101 / DSM 17681 / MLHE-1).